We begin with the raw amino-acid sequence, 185 residues long: Ribosome-recycling factor (185 aa).

Belongs to the RRF family.

The protein localises to the cytoplasm. Its function is as follows. Responsible for the release of ribosomes from messenger RNA at the termination of protein biosynthesis. May increase the efficiency of translation by recycling ribosomes from one round of translation to another. In Streptococcus thermophilus (strain ATCC BAA-491 / LMD-9), this protein is Ribosome-recycling factor.